A 531-amino-acid polypeptide reads, in one-letter code: UDP-glucuronosyltransferase 1A7 (531 aa).

A signal peptide spans 1–25; the sequence is MAPADVPASLPLGLCLLLASGFGHA. N-linked (GlcNAc...) asparagine glycans are attached at residues asparagine 71, asparagine 293, and asparagine 431. The helical transmembrane segment at 487–503 threads the bilayer; that stretch reads LDVIGFLLAIVLTVVFI.

The protein belongs to the UDP-glycosyltransferase family. Homodimer. Homooligomer. Interacts with UGT1A1, UGT1A3, UGT1A4, UGT1A6, UGT1A8, UGT1A9 and UGT1A10 to form heterodimers.

The protein localises to the endoplasmic reticulum membrane. The enzyme catalyses glucuronate acceptor + UDP-alpha-D-glucuronate = acceptor beta-D-glucuronoside + UDP + H(+). It catalyses the reaction 17alpha-estradiol + UDP-alpha-D-glucuronate = 17alpha-estradiol 3-O-(beta-D-glucuronate) + UDP + H(+). It carries out the reaction prunetin + UDP-alpha-D-glucuronate = prunetin-5-O-beta-D-glucuronide + UDP. The catalysed reaction is 5-epi-5-F2t-IsoP + UDP-alpha-D-glucuronate = 5-epi-5-F2t-IsoP-glucuronide + UDP + H(+). The enzyme catalyses (E)-ferulate + UDP-alpha-D-glucuronate = (E)-ferulic acid beta-D-glucuronate ester + UDP. It catalyses the reaction candesartan + UDP-alpha-D-glucuronate = candesartan O-beta-D-glucuronoside + UDP. It carries out the reaction SN-38 + UDP-alpha-D-glucuronate = SN-38 O-beta-D-glucuronide + UDP + H(+). The catalysed reaction is mycophenolate + UDP-alpha-D-glucuronate = mycophenolate 7-O-beta-D-glucuronide + UDP + H(+). Its function is as follows. UDP-glucuronosyltransferase (UGT) that catalyzes phase II biotransformation reactions in which lipophilic substrates are conjugated with glucuronic acid to increase the metabolite's water solubility, thereby facilitating excretion into either the urine or bile. Essential for the elimination and detoxification of drugs, xenobiotics and endogenous compounds. Catalyzes the glucuronidation of endogenous estrogen hormone epiestradiol. Involved in the glucuronidation of F2-isoprostane (5-epi-5-F2t-IsoP). Involved in the glucuronidation of the phytochemical ferulic acid at the carboxylic acid group. Also catalyzes the glucuronidation of the isoflavones genistein, daidzein, glycitein, formononetin, biochanin A and prunetin, which are phytoestrogens with anticancer and cardiovascular properties. Involved in the glucuronidation of the AGTR1 angiotensin receptor antagonist caderastan, a drug which can inhibit the effect of angiotensin II. Involved in the biotransformation of 7-ethyl-10-hydroxycamptothecin (SN-38), the pharmacologically active metabolite of the anticancer drug irinotecan. Also metabolizes mycophenolate, an immunosuppressive agent. The sequence is that of UDP-glucuronosyltransferase 1A7 from Rattus norvegicus (Rat).